Here is an 808-residue protein sequence, read N- to C-terminus: Phosphoinositide phosphatase SAC2 (808 aa).

The SAC domain maps to 158–551 (LCTVDLTKDF…GDTLALQYGG (394 aa)). Residues 429 to 476 (FQNQNPSTLENDDGECSTYDPPSKDETAPNLVVENGNDSKDAKEDQQK) are disordered. Over residues 465–476 (NDSKDAKEDQQK) the composition is skewed to basic and acidic residues. The short motif at 487 to 498 (RTNCIDCLDRTN) is the Phosphatase catalytic core element.

As to quaternary structure, component of the PI(3,5)P2 regulatory complex at least composed of ATG18, SAC/FIG4, FAB1 and VAC14. Mg(2+) is required as a cofactor. Ubiquitous with a higher level of expression in young seedlings than in other tissues.

Its subcellular location is the vacuole membrane. The enzyme catalyses a 1,2-diacyl-sn-glycero-3-phospho-(1D-myo-inositol-3,5-bisphosphate) + H2O = a 1,2-diacyl-sn-glycero-3-phospho-(1D-myo-inositol-3-phosphate) + phosphate. The PI(3,5)P2 regulatory complex regulates both the synthesis and turnover of phosphatidylinositol 3,5-bisphosphate (PtdIns(3,5)P2). The protein is Phosphoinositide phosphatase SAC2 (SAC2) of Arabidopsis thaliana (Mouse-ear cress).